Here is a 334-residue protein sequence, read N- to C-terminus: UDP-N-acetylenolpyruvoylglucosamine reductase (334 aa).

Positions 16-186 (INVFAKKIII…LSVGIKLPKT (171 aa)) constitute an FAD-binding PCMH-type domain. Arg162 is a catalytic residue. Ser232 (proton donor) is an active-site residue. Glu329 is a catalytic residue.

Belongs to the MurB family. Requires FAD as cofactor.

The protein resides in the cytoplasm. The enzyme catalyses UDP-N-acetyl-alpha-D-muramate + NADP(+) = UDP-N-acetyl-3-O-(1-carboxyvinyl)-alpha-D-glucosamine + NADPH + H(+). It functions in the pathway cell wall biogenesis; peptidoglycan biosynthesis. Cell wall formation. The chain is UDP-N-acetylenolpyruvoylglucosamine reductase from Buchnera aphidicola subsp. Baizongia pistaciae (strain Bp).